Reading from the N-terminus, the 572-residue chain is Proline--tRNA ligase (572 aa).

The protein belongs to the class-II aminoacyl-tRNA synthetase family. ProS type 1 subfamily. In terms of assembly, homodimer.

The protein localises to the cytoplasm. The catalysed reaction is tRNA(Pro) + L-proline + ATP = L-prolyl-tRNA(Pro) + AMP + diphosphate. Catalyzes the attachment of proline to tRNA(Pro) in a two-step reaction: proline is first activated by ATP to form Pro-AMP and then transferred to the acceptor end of tRNA(Pro). As ProRS can inadvertently accommodate and process non-cognate amino acids such as alanine and cysteine, to avoid such errors it has two additional distinct editing activities against alanine. One activity is designated as 'pretransfer' editing and involves the tRNA(Pro)-independent hydrolysis of activated Ala-AMP. The other activity is designated 'posttransfer' editing and involves deacylation of mischarged Ala-tRNA(Pro). The misacylated Cys-tRNA(Pro) is not edited by ProRS. This is Proline--tRNA ligase from Escherichia fergusonii (strain ATCC 35469 / DSM 13698 / CCUG 18766 / IAM 14443 / JCM 21226 / LMG 7866 / NBRC 102419 / NCTC 12128 / CDC 0568-73).